Here is a 191-residue protein sequence, read N- to C-terminus: Fe/S biogenesis protein NfuA (191 aa).

[4Fe-4S] cluster-binding residues include C149 and C152.

The protein belongs to the NfuA family. As to quaternary structure, homodimer. The cofactor is [4Fe-4S] cluster.

Its function is as follows. Involved in iron-sulfur cluster biogenesis. Binds a 4Fe-4S cluster, can transfer this cluster to apoproteins, and thereby intervenes in the maturation of Fe/S proteins. Could also act as a scaffold/chaperone for damaged Fe/S proteins. The sequence is that of Fe/S biogenesis protein NfuA from Yersinia enterocolitica serotype O:8 / biotype 1B (strain NCTC 13174 / 8081).